Consider the following 478-residue polypeptide: MSLLAFFLFTILVFSSSCCSATRFQGHRYMQRKTMLDLASKIGINYGRRGNNLPSPYQSINFIKSIKAGHVKLYDADPESLTLLSQTNLYVTITVPNHQITALSSNQTIADEWVRTNILPYYPQTQIRFVLVGNEILSYNSGNVSVNLVPAMRKIVNSLRLHGIHNIKVGTPLAMDSLRSSFPPSNGTFREEITGPVMLPLLKFLNGTNSYFFLNVHPYFRWSRNPMNTSLDFALFQGHSTYTDPQTGLVYRNLLDQMLDSVLFAMTKLGYPHMRLAISETGWPNFGDIDETGANILNAATYNRNLIKKMSASPPIGTPSRPGLPIPTFVFSLFNENQKSGSGTQRHWGILHPDGSPIYDVDFTGQTPLTGFNPLPKPTNNVPYKGQVWCVPVEGANETELEETLRMACAQSNTTCAALAPGRECYEPVSIYWHASYALNSYWAQFRNQSIQCFFNGLAHETTTNPGNDRCKFPSVTL.

The first 20 residues, 1 to 20 (MSLLAFFLFTILVFSSSCCS), serve as a signal peptide directing secretion. Glutamate 135 (proton donor) is an active-site residue. Catalysis depends on glutamate 280, which acts as the Nucleophile. Cysteine 390 and cysteine 453 are oxidised to a cystine.

The protein belongs to the glycosyl hydrolase 17 family. Post-translationally, contains two additional disulfide bonds, but it is unclear if they are between the pairs Cys-409-Cys-416 and Cys-425-Cys-471 or between the pairs Cys-409-Cys-471 and Cys-416-Cys-425. As to expression, anthers.

The enzyme catalyses Hydrolysis of (1-&gt;3)-beta-D-glucosidic linkages in (1-&gt;3)-beta-D-glucans.. Probable beta-1,3-glucanase that may be involved in the degradation of callose walls around the microspore tetrad during pollen development. May be required for pollen exine formation. This Arabidopsis thaliana (Mouse-ear cress) protein is Probable glucan endo-1,3-beta-glucosidase A6.